A 400-amino-acid polypeptide reads, in one-letter code: MIIKPKIRGFICTTTHPVGCEANVQEQIALTKAKGKIANGPKKVLVVGSSSGYGLSSRIAAAFGSDAATIGVFFEKPGTEAKPGTAGWYNSAAFDKFAKAEGLYSKSINCDAFSHEAKQKVIELIKQDLGQVDMVVYSLASPVRKLPDSGELVRSALKPIGETYTATAVDTNKDCIIEATVEPATEQEIADTVTVMGGQDWELWINALAEAGVLSDNCKTVAYSYIGTELTWPIYWHGALGKAKMDLDRAAKALNDKLSVTGGSANVAVLKSVVTQASSAIPVMPLYIAMVFKKMRQEGLHEGCMEQIYRMFSERLFRADGAKPETDSDNRLRLDDWELREDIQQHCRDLWPQVTTENLSELTDYQEYKAEFIKLFGFGIEGINYDADVNPYVEFDVIEL.

NAD(+)-binding positions include 48–53 (GSSSGY), 74–75 (FE), 111–112 (DA), and 139–140 (LA). Residue tyrosine 225 participates in substrate binding. The active-site Proton donor is tyrosine 235. Residues lysine 244 and 273 to 275 (VVT) contribute to the NAD(+) site.

It belongs to the TER reductase family. In terms of assembly, monomer.

The enzyme catalyses a 2,3-saturated acyl-[ACP] + NAD(+) = a (2E)-enoyl-[ACP] + NADH + H(+). It participates in lipid metabolism; fatty acid biosynthesis. In terms of biological role, involved in the final reduction of the elongation cycle of fatty acid synthesis (FAS II). Catalyzes the reduction of a carbon-carbon double bond in an enoyl moiety that is covalently linked to an acyl carrier protein (ACP). This chain is Enoyl-[acyl-carrier-protein] reductase [NADH], found in Shewanella oneidensis (strain ATCC 700550 / JCM 31522 / CIP 106686 / LMG 19005 / NCIMB 14063 / MR-1).